Consider the following 548-residue polypeptide: MAAKDVKFGNEARIKMLRGVNVLADAVKVTLGPKGRNVVLDKSFGAPSITKDGVSVAREIELEDKFENMGAQMVKEVASKANDAAGDGTTTATLLAQSIVNEGLKAVAAGMNPMDLKRGIDKAVISAVEELKHLSVPCSDSKAITQVGTISANADEKVGSLIAEAMEKVGNDGVITVEEGTGLQDELEVVKGMQFDRGYLSPYFINKPETGIVELENPYILMADKKISNVREMLPILESVAKSGKPLLIISEDLEGEALATLVVNSMRGIVKVAAVKAPGFGDRRKAMLQDISILTGGSVISEELAMELEKSTLEDLGQAKRVVISKDTTTIIGGVGEKHSIQSRISQIRQEIQEATSDYDKEKLNERLAKLSGGVAVLKVGAATEVEMKEKKARVEDALHATRAAVEEGVVAGGGVALVRVAGKIADLRGQNEDQNVGIRVALRAMEAPLRQIVSNSGEEPSVVTNNVKDGKGNYGYNAATDEYGDMIDFGILDPTKVTRSALQYAASVAGLMITTECMVTDLPKEDKSSDSSSSPAGGMGGMGGMM.

ATP-binding positions include 30–33 (TLGP), K51, 87–91 (DGTTT), G415, 479–481 (NAA), and D495. The segment at 524–548 (LPKEDKSSDSSSSPAGGMGGMGGMM) is disordered. The segment covering 539–548 (GGMGGMGGMM) has biased composition (gly residues).

Belongs to the chaperonin (HSP60) family. In terms of assembly, forms a cylinder of 14 subunits composed of two heptameric rings stacked back-to-back. Interacts with the co-chaperonin GroES.

It localises to the cytoplasm. It catalyses the reaction ATP + H2O + a folded polypeptide = ADP + phosphate + an unfolded polypeptide.. Its function is as follows. Together with its co-chaperonin GroES, plays an essential role in assisting protein folding. The GroEL-GroES system forms a nano-cage that allows encapsulation of the non-native substrate proteins and provides a physical environment optimized to promote and accelerate protein folding. This chain is Chaperonin GroEL, found in Buchnera aphidicola subsp. Acyrthosiphon pisum (strain 5A).